A 383-amino-acid polypeptide reads, in one-letter code: MATTSATSTVNTSSLATTMTTNFTSLLTSVVTTIASLVPSTNSSEDYYDDLDDVDYEESAPCYKSDTTRLAAQVVPALYLLVFLFGLLGNILVVIIVIRYMKIKNLTNMLLLNLAISDLLFLLTLPFWMHYIGMYHDWTFGISLCKLLRGVCYMSLYSQVFCIILLTVDRYLAVVYAVTALRFRTVTCGIVTCVCTWFLAGLLSLPEFFFHGHQDDNGRVQCDPYYPEMSTNVWRRAHVAKVIMLSLILPLLIMAVCYYVIIRRLLRRPSKKKYKAIRLIFVIMVAYFVFWTPYNIVLLLSTFHATLLNLQCALSSNLDMALLITKTVAYTHCCINPVIYAFVGEKFRRHLYHFFHTYVAIYLCKYIPFLSGDGEGKEGPTRI.

Helical transmembrane passes span 13-35 (SSLATTMTTNFTSLLTSVVTTIA), 78-98 (LYLLVFLFGLLGNILVVIIVI), 109-129 (MLLLNLAISDLLFLLTLPFWM), 160-180 (VFCIILLTVDRYLAVVYAVTA), 190-210 (IVTCVCTWFLAGLLSLPEFFF), 242-262 (VIMLSLILPLLIMAVCYYVII), 279-299 (LIFVIMVAYFVFWTPYNIVLL), 323-343 (LITKTVAYTHCCINPVIYAFV), and 351-371 (LYHFFHTYVAIYLCKYIPFLS). A disulfide bond links cysteine 145 and cysteine 222.

It belongs to the G-protein coupled receptor 1 family.

It is found in the host membrane. The protein is G-protein coupled receptor E1 (E1) of Equine herpesvirus 2 (strain 86/87) (EHV-2).